We begin with the raw amino-acid sequence, 185 residues long: Elongation factor P (185 aa).

This sequence belongs to the elongation factor P family.

Its subcellular location is the cytoplasm. It participates in protein biosynthesis; polypeptide chain elongation. Its function is as follows. Involved in peptide bond synthesis. Stimulates efficient translation and peptide-bond synthesis on native or reconstituted 70S ribosomes in vitro. Probably functions indirectly by altering the affinity of the ribosome for aminoacyl-tRNA, thus increasing their reactivity as acceptors for peptidyl transferase. This Bacillus anthracis (strain CDC 684 / NRRL 3495) protein is Elongation factor P.